We begin with the raw amino-acid sequence, 255 residues long: MADGISSFWGPVTSTIECCEMNYAYSSYIAEFYNTISNVPGILLALIGLVNALRQRFEKRFSILHISNMILAIGSMLYHATLQHVQQQSDETPMVWEILLYMYILYSPDWHYRSTMPTFLFLYGAAFAIVHAYLRFGIGFKVHYVILCLLCIPRMYKYYIHTEDTAAKRIAKWYVATILVGSICWFCDRVFCKTISQWPVNPQGHALWHVFMSFNSYCANTFLMFCRAQQRGWNPKVKYFLGVLPYVKIEKPKTQ.

The Lumenal segment spans residues 1–28 (MADGISSFWGPVTSTIECCEMNYAYSSY). A helical transmembrane segment spans residues 29-49 (IAEFYNTISNVPGILLALIGL). At 50–60 (VNALRQRFEKR) the chain is on the cytoplasmic side. Residues 61–81 (FSILHISNMILAIGSMLYHAT) form a helical membrane-spanning segment. His79 is a binding site for Zn(2+). Residues 82–91 (LQHVQQQSDE) lie on the Lumenal side of the membrane. Residues 92-112 (TPMVWEILLYMYILYSPDWHY) form a helical membrane-spanning segment. The Cytoplasmic portion of the chain corresponds to 113 to 118 (RSTMPT). 2 helical membrane-spanning segments follow: residues 119–139 (FLFL…FGIG) and 140–160 (FKVH…KYYI). Residues 161–169 (HTEDTAAKR) lie on the Cytoplasmic side of the membrane. Residues 170–192 (IAKWYVATILVGSICWFCDRVFC) form a helical membrane-spanning segment. Over 193 to 205 (KTISQWPVNPQGH) the chain is Lumenal. 2 residues coordinate Zn(2+): His205 and His209. The helical transmembrane segment at 206–226 (ALWHVFMSFNSYCANTFLMFC) threads the bilayer. The Cytoplasmic portion of the chain corresponds to 227-255 (RAQQRGWNPKVKYFLGVLPYVKIEKPKTQ).

It belongs to the alkaline ceramidase family. Zn(2+) is required as a cofactor. As to expression, mostly expressed in roots, shoot meristems and pollen, and, to a lower extent, in mature leaves.

It is found in the endoplasmic reticulum membrane. Its subcellular location is the golgi apparatus membrane. Its function is as follows. Hydrolyzes only phytoceramide into phytosphingosine and free fatty acid. Does not have reverse activity. Affects plant morphogenesis. Required for the formation of wax layer that ensure cuticle permeability. Implicated in abscisic acid (ABA)-mediated stomatal closure. Involved in both biotic and abiotic stresses. Promotes salt resistance and defenses responses toward pathogenic bacteria (e.g. P.syringae) and against the fungal toxin fumonisin B1 (FB1). This chain is Alkaline ceramidase, found in Arabidopsis thaliana (Mouse-ear cress).